The following is an 839-amino-acid chain: NT-3 growth factor receptor (839 aa).

A signal peptide spans M1 to A31. 2 disulfide bridges follow: C32–C38 and C36–C45. Residues C32–T429 lie on the Extracellular side of the membrane. N-linked (GlcNAc...) asparagine glycans are attached at residues N72 and N79. LRR repeat units follow at residues G104–K125 and H128–T149. Residues N133 and N163 are each glycosylated (N-linked (GlcNAc...) asparagine). Residues N160–L209 form the LRRCT domain. Cystine bridges form between C164–C189 and C166–C207. 7 N-linked (GlcNAc...) asparagine glycosylation sites follow: N203, N218, N232, N259, N267, N272, and N294. 2 consecutive Ig-like C2-type domains span residues P210–T300 and S309–N382. A disulfide bridge connects residues C231 and C284. A disulfide bond links C320 and C362. N375 and N388 each carry an N-linked (GlcNAc...) asparagine glycan. A helical transmembrane segment spans residues F430 to I453. Topologically, residues N454–G839 are cytoplasmic. S493 carries the phosphoserine modification. The residue at position 516 (Y516) is a Phosphotyrosine; by autocatalysis. Residues I538–G839 enclose the Protein kinase domain. Residues L544 to V552 and K572 each bind ATP. D679 acts as the Proton acceptor in catalysis. 3 positions are modified to phosphotyrosine; by autocatalysis: Y705, Y709, and Y710.

This sequence belongs to the protein kinase superfamily. Tyr protein kinase family. Insulin receptor subfamily. As to quaternary structure, exists in a dynamic equilibrium between monomeric (low affinity) and dimeric (high affinity) structures. Binds SH2B2. Interacts with SQSTM1 and KIDINS220. Interacts with PTPRS. Interacts with MAPK8IP3/JIP3. Post-translationally, ligand-mediated auto-phosphorylation. Widely expressed but mainly in nervous tissue. Isoform 2 is expressed at higher levels in adult brain than in fetal brain.

The protein resides in the membrane. It catalyses the reaction L-tyrosyl-[protein] + ATP = O-phospho-L-tyrosyl-[protein] + ADP + H(+). Receptor tyrosine kinase involved in nervous system and probably heart development. Upon binding of its ligand NTF3/neurotrophin-3, NTRK3 autophosphorylates and activates different signaling pathways, including the phosphatidylinositol 3-kinase/AKT and the MAPK pathways, that control cell survival and differentiation. The sequence is that of NT-3 growth factor receptor (NTRK3) from Homo sapiens (Human).